Reading from the N-terminus, the 213-residue chain is Protein-L-isoaspartate O-methyltransferase (213 aa).

The active site involves S60.

The protein belongs to the methyltransferase superfamily. L-isoaspartyl/D-aspartyl protein methyltransferase family.

It is found in the cytoplasm. It catalyses the reaction [protein]-L-isoaspartate + S-adenosyl-L-methionine = [protein]-L-isoaspartate alpha-methyl ester + S-adenosyl-L-homocysteine. Functionally, catalyzes the methyl esterification of L-isoaspartyl residues in peptides and proteins that result from spontaneous decomposition of normal L-aspartyl and L-asparaginyl residues. It plays a role in the repair and/or degradation of damaged proteins. In Roseobacter denitrificans (strain ATCC 33942 / OCh 114) (Erythrobacter sp. (strain OCh 114)), this protein is Protein-L-isoaspartate O-methyltransferase.